Here is a 193-residue protein sequence, read N- to C-terminus: Zinc finger CCHC domain-containing protein 17 (193 aa).

The S1 motif; truncated domain occupies 1–40; that stretch reads MSSCRVDKPSEIVDVGDKVWVKLIGREMKNDRIKVSLSMK. Ser66 is modified (phosphoserine). A CCHC-type zinc finger spans residues 83–100; sequence TTCKKCGCKGHFAKDCFM. Residue Lys96 is modified to N6-acetyllysine. The disordered stretch occupies residues 113 to 193; sequence EEEEKEEAKS…KKKHKKKHKE (81 aa). A compositionally biased stretch (basic and acidic residues) spans 118–129; the sequence is EEAKSAEFEKPV. The segment covering 134–150 has biased composition (basic residues); that stretch reads PSRKRKKEKKKKKHRDR. Residue Ser135 is modified to Phosphoserine. Positions 163–177 are enriched in basic and acidic residues; it reads DTGKRARHTSKDSKA. A compositionally biased stretch (basic residues) spans 178 to 193; it reads AKKKKKKKKHKKKHKE.

As to quaternary structure, may interact with PNN. May associate with the 60 S ribosomal subunit.

The protein resides in the nucleus. It is found in the nucleolus. The chain is Zinc finger CCHC domain-containing protein 17 (ZCCHC17) from Macaca fascicularis (Crab-eating macaque).